Consider the following 288-residue polypeptide: Nucleotide-binding protein Gura_2968 (288 aa).

Position 8–15 (8–15 (GLSGSGKS)) interacts with ATP. 59 to 62 (DIRG) serves as a coordination point for GTP.

This sequence belongs to the RapZ-like family.

Functionally, displays ATPase and GTPase activities. In Geotalea uraniireducens (strain Rf4) (Geobacter uraniireducens), this protein is Nucleotide-binding protein Gura_2968.